A 331-amino-acid polypeptide reads, in one-letter code: MSTQLDASQPSNDVASPAAYDPTQKQKSQAKTARIPIKVIPAERLKKPEWIRVRAAAPGSRFYDIKRILREHNLHTVCEEASCPNIGECFGKGTATFMIMGDKCTRRCPFCDVGHGRPDPLDAQEPENLARTIAALKLSYVVITSVDRDDLRDGGAAHFVECITKIRELSPITRIEVLVPDFRGRLDRALAILNAGPPDVMNHNLETVPRLYKQARPGSDYLHSLKLLAEFKALHPDVPTKSGLMLGLGETDEEILEVMRDMRAHNVDMITIGQYLQPSEHHLPVLRYVHPDTFAMFEREAYAMGFSHAAVGAMVRSSYHADEQAHAAGVN.

Residues 1 to 14 (MSTQLDASQPSNDV) are compositionally biased toward polar residues. Residues 1–32 (MSTQLDASQPSNDVASPAAYDPTQKQKSQAKT) are disordered. Residues C78, C83, C89, C104, C108, C111, and S318 each contribute to the [4Fe-4S] cluster site. The 219-residue stretch at 89–307 (CFGKGTATFM…EREAYAMGFS (219 aa)) folds into the Radical SAM core domain.

The protein belongs to the radical SAM superfamily. Lipoyl synthase family. It depends on [4Fe-4S] cluster as a cofactor.

It is found in the cytoplasm. It catalyses the reaction [[Fe-S] cluster scaffold protein carrying a second [4Fe-4S](2+) cluster] + N(6)-octanoyl-L-lysyl-[protein] + 2 oxidized [2Fe-2S]-[ferredoxin] + 2 S-adenosyl-L-methionine + 4 H(+) = [[Fe-S] cluster scaffold protein] + N(6)-[(R)-dihydrolipoyl]-L-lysyl-[protein] + 4 Fe(3+) + 2 hydrogen sulfide + 2 5'-deoxyadenosine + 2 L-methionine + 2 reduced [2Fe-2S]-[ferredoxin]. The protein operates within protein modification; protein lipoylation via endogenous pathway; protein N(6)-(lipoyl)lysine from octanoyl-[acyl-carrier-protein]: step 2/2. Functionally, catalyzes the radical-mediated insertion of two sulfur atoms into the C-6 and C-8 positions of the octanoyl moiety bound to the lipoyl domains of lipoate-dependent enzymes, thereby converting the octanoylated domains into lipoylated derivatives. This Bordetella avium (strain 197N) protein is Lipoyl synthase.